We begin with the raw amino-acid sequence, 275 residues long: Provicilin (275 aa).

The segment covering 1–17 (DNAEIEKILLEEHEKET) has biased composition (basic and acidic residues). Disordered regions lie at residues 1–71 (DNAE…LKSS) and 134–164 (LVGQ…KNQV). A compositionally biased stretch (low complexity) spans 50 to 63 (NAKSSSKKSVSSRS). In terms of domain architecture, Cupin type-1 spans 66–238 (FNLKSSDPIY…TFPGSAQEVD (173 aa)). Acidic residues predominate over residues 147 to 157 (EEDDEEEEQRE).

Belongs to the 7S seed storage protein family.

It localises to the vacuole. It is found in the aleurone grain. Its function is as follows. Seed storage protein. The sequence is that of Provicilin from Pisum sativum (Garden pea).